The primary structure comprises 587 residues: Barrierpepsin (587 aa).

The first 24 residues, 1–24, serve as a signal peptide directing secretion; that stretch reads MSAINHLCLKLILASFAIINTITA. The Peptidase A1 domain maps to 45–393; the sequence is YATTLDIGTP…DLDNYKISLA (349 aa). Residue Asp-63 is part of the active site. N-linked (GlcNAc...) asparagine glycosylation is found at Asn-84, Asn-90, and Asn-268. Asp-287 is an active-site residue. A glycan (N-linked (GlcNAc...) asparagine) is linked at Asn-308. Cys-322 and Cys-358 are joined by a disulfide. N-linked (GlcNAc...) asparagine glycosylation is found at Asn-366, Asn-398, Asn-468, Asn-503, and Asn-551. A disordered region spans residues 466-505; sequence SRNCSTKMPGTRSTTVLSKPTQNSAMHQSTGAVTQTSNET.

Belongs to the peptidase A1 family.

The protein resides in the secreted. The catalysed reaction is Selective cleavage of 6-Leu-|-Lys-7 bond in the pheromone alpha-mating factor.. Its function is as follows. This protein called 'barrier activity' is excreted by yeast cells mating type a. It is probably a protease that cleaves alpha-factor and thus acts as an antagonist of this mating pheromone and establishes optimal pheromone concentration for conjugation. The chain is Barrierpepsin (BAR1) from Saccharomyces cerevisiae (strain ATCC 204508 / S288c) (Baker's yeast).